A 236-amino-acid chain; its full sequence is UPF0502 protein BceJ2315_62050 (236 aa).

It belongs to the UPF0502 family.

The chain is UPF0502 protein BceJ2315_62050 from Burkholderia cenocepacia (strain ATCC BAA-245 / DSM 16553 / LMG 16656 / NCTC 13227 / J2315 / CF5610) (Burkholderia cepacia (strain J2315)).